A 314-amino-acid chain; its full sequence is L-lactate dehydrogenase (314 aa).

Residues V17, D38, K43, Y69, and 83–84 each bind NAD(+); that span reads GA. Residues Q86 and R92 each coordinate substrate. NAD(+) is bound by residues S105, 122–124, and S147; that span reads ASN. 124–127 is a substrate binding site; that stretch reads NPVD. 152 to 155 is a binding site for substrate; the sequence is DSAR. The beta-D-fructose 1,6-bisphosphate site is built by R157 and H172. H179 (proton acceptor) is an active-site residue. Y223 carries the phosphotyrosine modification. A substrate-binding site is contributed by T232.

The protein belongs to the LDH/MDH superfamily. LDH family. In terms of assembly, homotetramer.

The protein resides in the cytoplasm. It catalyses the reaction (S)-lactate + NAD(+) = pyruvate + NADH + H(+). The protein operates within fermentation; pyruvate fermentation to lactate; (S)-lactate from pyruvate: step 1/1. With respect to regulation, allosterically activated by fructose 1,6-bisphosphate (FBP). In terms of biological role, catalyzes the conversion of lactate to pyruvate. In Corynebacterium glutamicum (strain R), this protein is L-lactate dehydrogenase.